The following is a 274-amino-acid chain: uncharacterized protein (274 aa).

This is an uncharacterized protein from Bacillus subtilis (strain 168).